The primary structure comprises 527 residues: MDLSLSGGDFRFAFNNVNFSDRLLRIEITQSSGEGEVICSSIVDWARDRKRRREDVTNHTNDATCHVESDLNKNSCEIVNENSNNKTQVLVTAAEQEPKSGGEDENERLTNNNTSVLSVQELHISSAILAAKSPFFYKLFSNGMLESEQKQMTLKIDASEETAVMELLKFMYSNSLSVTASSALLDVLMVADKFEVASCMKYCSQLLLKMPMTLESSLLLLDLPSSLLMADSVKPLTNAARQFIASRYKNMSKITMEELMALPLVGIEAILASDGLEIQSEDVVYEVVLKWVKSHYSVLEARQEVLGSHLARYIRFPHMTTDRLKKILTSNDFRPSVASKLVVEALFFKTESLAHQHVLLAHEQPASTSRRFAKRAYVHRPIKIVEFAVPRPQCIIYLDLKRKECESIYPSSRISSQQFTLGGQGFFLSAQCNMDHLCLIHCFGLFIGMQENGSASASVTVDYDFSVRSKPTMEFVGKFKGIYTFTRGKAVGCRNLLGIPWDIFTAKNCPYFINDVLHLRADLSIRL.

A BTB domain is found at 111-180 (NNNTSVLSVQ…MYSNSLSVTA (70 aa)). In terms of domain architecture, BACK spans 233–327 (VKPLTNAARQ…HMTTDRLKKI (95 aa)).

It participates in protein modification; protein ubiquitination. Functionally, may act as a substrate-specific adapter of an E3 ubiquitin-protein ligase complex (CUL3-RBX1-BTB) which mediates the ubiquitination and subsequent proteasomal degradation of target proteins. The chain is BTB/POZ domain-containing protein At4g01160 from Arabidopsis thaliana (Mouse-ear cress).